Consider the following 407-residue polypeptide: Probable tRNA sulfurtransferase (407 aa).

A THUMP domain is found at 61–165 (NEITYRLSKI…LDAIYMYEEV (105 aa)). ATP is bound by residues 183–184 (ML), 208–209 (HF), Arg265, Gly287, and Gln296.

Belongs to the ThiI family.

It is found in the cytoplasm. The enzyme catalyses [ThiI sulfur-carrier protein]-S-sulfanyl-L-cysteine + a uridine in tRNA + 2 reduced [2Fe-2S]-[ferredoxin] + ATP + H(+) = [ThiI sulfur-carrier protein]-L-cysteine + a 4-thiouridine in tRNA + 2 oxidized [2Fe-2S]-[ferredoxin] + AMP + diphosphate. The catalysed reaction is [ThiS sulfur-carrier protein]-C-terminal Gly-Gly-AMP + S-sulfanyl-L-cysteinyl-[cysteine desulfurase] + AH2 = [ThiS sulfur-carrier protein]-C-terminal-Gly-aminoethanethioate + L-cysteinyl-[cysteine desulfurase] + A + AMP + 2 H(+). Its pathway is cofactor biosynthesis; thiamine diphosphate biosynthesis. In terms of biological role, catalyzes the ATP-dependent transfer of a sulfur to tRNA to produce 4-thiouridine in position 8 of tRNAs, which functions as a near-UV photosensor. Also catalyzes the transfer of sulfur to the sulfur carrier protein ThiS, forming ThiS-thiocarboxylate. This is a step in the synthesis of thiazole, in the thiamine biosynthesis pathway. The sulfur is donated as persulfide by IscS. The polypeptide is Probable tRNA sulfurtransferase (Staphylococcus aureus (strain JH1)).